We begin with the raw amino-acid sequence, 207 residues long: Uracil phosphoribosyltransferase (207 aa).

Residues R77, R102, and 129-137 contribute to the 5-phospho-alpha-D-ribose 1-diphosphate site; that span reads DPMLATGGS. Uracil is bound by residues I192 and 197–199; that span reads GDA. D198 provides a ligand contact to 5-phospho-alpha-D-ribose 1-diphosphate.

This sequence belongs to the UPRTase family. Mg(2+) serves as cofactor.

The catalysed reaction is UMP + diphosphate = 5-phospho-alpha-D-ribose 1-diphosphate + uracil. It functions in the pathway pyrimidine metabolism; UMP biosynthesis via salvage pathway; UMP from uracil: step 1/1. With respect to regulation, allosterically activated by GTP. Functionally, catalyzes the conversion of uracil and 5-phospho-alpha-D-ribose 1-diphosphate (PRPP) to UMP and diphosphate. This chain is Uracil phosphoribosyltransferase, found in Mesoplasma florum (strain ATCC 33453 / NBRC 100688 / NCTC 11704 / L1) (Acholeplasma florum).